The following is a 212-amino-acid chain: Probable GTP-binding protein EngB (212 aa).

The 173-residue stretch at 40–212 (SLPEIAFVGK…KASLAKCIKA (173 aa)) folds into the EngB-type G domain. GTP-binding positions include 48–55 (GKSNVGKS), 75–79 (GRTRQ), 93–96 (DLPG), 160–163 (TKSD), and 191–193 (VSS). Residues Ser-55 and Thr-77 each contribute to the Mg(2+) site.

This sequence belongs to the TRAFAC class TrmE-Era-EngA-EngB-Septin-like GTPase superfamily. EngB GTPase family. It depends on Mg(2+) as a cofactor.

Necessary for normal cell division and for the maintenance of normal septation. In Rickettsia akari (strain Hartford), this protein is Probable GTP-binding protein EngB.